The primary structure comprises 431 residues: Histidinol dehydrogenase (431 aa).

The NAD(+) site is built by Tyr-130, Gln-191, and Asn-214. Substrate-binding residues include Ser-237, Gln-259, and His-262. 2 residues coordinate Zn(2+): Gln-259 and His-262. Residues Glu-327 and His-328 each act as proton acceptor in the active site. Residues His-328, Asp-361, Glu-415, and His-420 each contribute to the substrate site. Asp-361 is a Zn(2+) binding site. Residue His-420 coordinates Zn(2+).

It belongs to the histidinol dehydrogenase family. It depends on Zn(2+) as a cofactor.

The catalysed reaction is L-histidinol + 2 NAD(+) + H2O = L-histidine + 2 NADH + 3 H(+). It participates in amino-acid biosynthesis; L-histidine biosynthesis; L-histidine from 5-phospho-alpha-D-ribose 1-diphosphate: step 9/9. Functionally, catalyzes the sequential NAD-dependent oxidations of L-histidinol to L-histidinaldehyde and then to L-histidine. The sequence is that of Histidinol dehydrogenase from Rhodopseudomonas palustris (strain ATCC BAA-98 / CGA009).